We begin with the raw amino-acid sequence, 177 residues long: Large ribosomal subunit protein uL6 (177 aa).

It belongs to the universal ribosomal protein uL6 family. In terms of assembly, part of the 50S ribosomal subunit.

Functionally, this protein binds to the 23S rRNA, and is important in its secondary structure. It is located near the subunit interface in the base of the L7/L12 stalk, and near the tRNA binding site of the peptidyltransferase center. The polypeptide is Large ribosomal subunit protein uL6 (Bordetella avium (strain 197N)).